Consider the following 278-residue polypeptide: 4-diphosphocytidyl-2-C-methyl-D-erythritol kinase (278 aa).

Lys9 is an active-site residue. Residue Pro93–Ser103 participates in ATP binding. Asp135 is an active-site residue.

It belongs to the GHMP kinase family. IspE subfamily.

It catalyses the reaction 4-CDP-2-C-methyl-D-erythritol + ATP = 4-CDP-2-C-methyl-D-erythritol 2-phosphate + ADP + H(+). It functions in the pathway isoprenoid biosynthesis; isopentenyl diphosphate biosynthesis via DXP pathway; isopentenyl diphosphate from 1-deoxy-D-xylulose 5-phosphate: step 3/6. Its function is as follows. Catalyzes the phosphorylation of the position 2 hydroxy group of 4-diphosphocytidyl-2C-methyl-D-erythritol. The sequence is that of 4-diphosphocytidyl-2-C-methyl-D-erythritol kinase from Nitrosomonas eutropha (strain DSM 101675 / C91 / Nm57).